Here is a 260-residue protein sequence, read N- to C-terminus: NAD-capped RNA hydrolase NudC (260 aa).

A substrate-binding site is contributed by Arg69. Positions 98 and 101 each coordinate Zn(2+). Glu111 provides a ligand contact to substrate. Cys116 and Cys119 together coordinate Zn(2+). Tyr124 is a binding site for substrate. The 124-residue stretch at 125–248 (PQIAPCIIVA…TVARRLIEDT (124 aa)) folds into the Nudix hydrolase domain. Ala158, Glu174, and Glu178 together coordinate a divalent metal cation. A Nudix box motif is present at residues 159–180 (GFVEVGETLEQTVVREVMEESQ). 192–199 (QPWPFPHS) lines the substrate pocket. Residue Glu219 participates in a divalent metal cation binding. Ala241 lines the substrate pocket.

It belongs to the Nudix hydrolase family. NudC subfamily. Homodimer. The cofactor is Mg(2+). It depends on Mn(2+) as a cofactor. Zn(2+) serves as cofactor.

The catalysed reaction is a 5'-end NAD(+)-phospho-ribonucleoside in mRNA + H2O = a 5'-end phospho-adenosine-phospho-ribonucleoside in mRNA + beta-nicotinamide D-ribonucleotide + 2 H(+). It catalyses the reaction NAD(+) + H2O = beta-nicotinamide D-ribonucleotide + AMP + 2 H(+). It carries out the reaction NADH + H2O = reduced beta-nicotinamide D-ribonucleotide + AMP + 2 H(+). MRNA decapping enzyme that specifically removes the nicotinamide adenine dinucleotide (NAD) cap from a subset of mRNAs by hydrolyzing the diphosphate linkage to produce nicotinamide mononucleotide (NMN) and 5' monophosphate mRNA. The NAD-cap is present at the 5'-end of some mRNAs and stabilizes RNA against 5'-processing. Has preference for mRNAs with a 5'-end purine. Catalyzes the hydrolysis of a broad range of dinucleotide pyrophosphates. This Pectobacterium atrosepticum (strain SCRI 1043 / ATCC BAA-672) (Erwinia carotovora subsp. atroseptica) protein is NAD-capped RNA hydrolase NudC.